The following is a 237-amino-acid chain: MGQKINPIGFRLGINRTWDSRWFADNAEYGQLLHEDLKIRAYLMEELKSAGIAKVVIERPHKKCRVTIHSARPGLIIGKKGADIEKLRKKLSEMTNSETHLNIVEVRKPEVDATLVAQSIAQQLERRVAFRRAMKRAVQSAMRLGAEGIKITCAGRLGGAEIARTEWYREGRVPLHTLRADIDYGTAEAETAFGICGVKVWIFKGEILEHDPMASERRATESDNQGGSGRERRRENA.

The KH type-2 domain occupies 39 to 107 (IRAYLMEELK…ETHLNIVEVR (69 aa)). Positions 213 to 237 (MASERRATESDNQGGSGRERRRENA) are disordered.

Belongs to the universal ribosomal protein uS3 family. In terms of assembly, part of the 30S ribosomal subunit. Forms a tight complex with proteins S10 and S14.

Its function is as follows. Binds the lower part of the 30S subunit head. Binds mRNA in the 70S ribosome, positioning it for translation. The polypeptide is Small ribosomal subunit protein uS3 (Rhizobium meliloti (strain 1021) (Ensifer meliloti)).